A 219-amino-acid chain; its full sequence is Epididymal secretory glutathione peroxidase (219 aa).

The first 21 residues, 1 to 21 (MTVQLGAFYLFPLFMAGFVQT), serve as a signal peptide directing secretion. Cys71 is an active-site residue.

The protein belongs to the glutathione peroxidase family. In terms of assembly, homotetramer. In terms of tissue distribution, proximal caput epididymis.

It is found in the secreted. The catalysed reaction is 2 glutathione + H2O2 = glutathione disulfide + 2 H2O. In terms of biological role, may constitute a glutathione peroxidase-like protective system against peroxide damage in sperm membrane lipids. Since the purified porcine enzyme has very little activity towards hydrogen peroxide or organic hydroperoxides the protective effect is not likely to be exerted by its enzymatic activity. Instead, may protect sperm from premature acrosome reaction in the epididymis by binding to lipid peroxides, which might otherwise interact with phospholipase A2 and induce the acrosome reaction. This Sus scrofa (Pig) protein is Epididymal secretory glutathione peroxidase (GPX5).